The sequence spans 76 residues: MLQRFDLDSQDLLFKAESLIVNSTNRYHVTLQIARRAKQARYEEMENLSEETGIKPVLRAILEMSDELNQPEIIGG.

Belongs to the RNA polymerase subunit omega family. In cyanobacteria the RNAP catalytic core is composed of 2 alpha, 1 beta, 1 beta', 1 gamma and 1 omega subunit. When a sigma factor is associated with the core the holoenzyme is formed, which can initiate transcription.

It catalyses the reaction RNA(n) + a ribonucleoside 5'-triphosphate = RNA(n+1) + diphosphate. Its function is as follows. Promotes RNA polymerase assembly. Latches the N- and C-terminal regions of the beta' subunit thereby facilitating its interaction with the beta and alpha subunits. In Synechococcus elongatus (strain ATCC 33912 / PCC 7942 / FACHB-805) (Anacystis nidulans R2), this protein is DNA-directed RNA polymerase subunit omega.